A 274-amino-acid chain; its full sequence is Large ribosomal subunit protein uL2 (274 aa).

A disordered region spans residues 224-274; that stretch reads VMNPVDHPHGGGEGRSPIGRNPVTPWGKPALGARTRKKKPGDRLIVKRRAR. Residues 257 to 274 show a composition bias toward basic residues; sequence RTRKKKPGDRLIVKRRAR.

This sequence belongs to the universal ribosomal protein uL2 family. As to quaternary structure, part of the 50S ribosomal subunit. Forms a bridge to the 30S subunit in the 70S ribosome.

In terms of biological role, one of the primary rRNA binding proteins. Required for association of the 30S and 50S subunits to form the 70S ribosome, for tRNA binding and peptide bond formation. It has been suggested to have peptidyltransferase activity; this is somewhat controversial. Makes several contacts with the 16S rRNA in the 70S ribosome. This chain is Large ribosomal subunit protein uL2, found in Pelotomaculum thermopropionicum (strain DSM 13744 / JCM 10971 / SI).